We begin with the raw amino-acid sequence, 428 residues long: Trigger factor (428 aa).

Positions 163–248 (GDIVDIDFEG…VNDVKVKELP (86 aa)) constitute a PPIase FKBP-type domain.

It belongs to the FKBP-type PPIase family. Tig subfamily.

It is found in the cytoplasm. The enzyme catalyses [protein]-peptidylproline (omega=180) = [protein]-peptidylproline (omega=0). Functionally, involved in protein export. Acts as a chaperone by maintaining the newly synthesized protein in an open conformation. Functions as a peptidyl-prolyl cis-trans isomerase. The protein is Trigger factor of Acetivibrio thermocellus (strain ATCC 27405 / DSM 1237 / JCM 9322 / NBRC 103400 / NCIMB 10682 / NRRL B-4536 / VPI 7372) (Clostridium thermocellum).